A 533-amino-acid chain; its full sequence is Probable fucosyltransferase 5 (533 aa).

Residues 1–13 (MYQKFQISGKIVK) are Cytoplasmic-facing. Residues 14–34 (TLGLKMKVLIAVSFGSLLFIL) traverse the membrane as a helical; Signal-anchor for type II membrane protein segment. The Lumenal portion of the chain corresponds to 35-533 (SYSNNFNNKL…YGGLKLYDEF (499 aa)). Asn-202, Asn-227, Asn-374, Asn-396, and Asn-475 each carry an N-linked (GlcNAc...) asparagine glycan.

The protein belongs to the glycosyltransferase 37 family. Expressed in roots, leaves, flowers and siliques.

It is found in the golgi apparatus. It localises to the golgi stack membrane. It participates in protein modification; protein glycosylation. Functionally, may be involved in cell wall biosynthesis. May act as a fucosyltransferase. In Arabidopsis thaliana (Mouse-ear cress), this protein is Probable fucosyltransferase 5 (FUT5).